The chain runs to 397 residues: Sexual differentiation process protein isp7 (397 aa).

Residues Pro255 to Gly353 form the Fe2OG dioxygenase domain.

The protein belongs to the iron/ascorbate-dependent oxidoreductase family.

This Schizosaccharomyces pombe (strain 972 / ATCC 24843) (Fission yeast) protein is Sexual differentiation process protein isp7 (isp7).